A 349-amino-acid chain; its full sequence is Isopentenyl-diphosphate delta-isomerase (349 aa).

9 to 10 (RK) serves as a coordination point for substrate. FMN contacts are provided by residues 65 to 67 (AMT), Ser95, and Asn124. 95–97 (STH) provides a ligand contact to substrate. Substrate is bound at residue Gln154. A Mg(2+)-binding site is contributed by Glu155. Residues Lys186, Ser211, Thr216, 262-264 (GLR), and 283-284 (SR) each bind FMN.

It belongs to the IPP isomerase type 2 family. As to quaternary structure, homooctamer. Dimer of tetramers. Requires FMN as cofactor. NADPH serves as cofactor. Mg(2+) is required as a cofactor.

Its subcellular location is the cytoplasm. The catalysed reaction is isopentenyl diphosphate = dimethylallyl diphosphate. Its function is as follows. Involved in the biosynthesis of isoprenoids. Catalyzes the 1,3-allylic rearrangement of the homoallylic substrate isopentenyl (IPP) to its allylic isomer, dimethylallyl diphosphate (DMAPP). The sequence is that of Isopentenyl-diphosphate delta-isomerase from Staphylococcus aureus (strain MSSA476).